The sequence spans 204 residues: uncharacterized protein (204 aa).

6 helical membrane-spanning segments follow: residues 19–39, 42–62, 78–98, 116–136, 143–163, and 167–187; these read TANPAPLGLLGFGITTILLNL, AGLFPINSMILAMGFAYGGIA, GTVAFGSYGLFWWSLVLLLVI, PVAMASYLFMWGLFTLLMFIA, GIQVIFISLAVLFFLLTAGEI, and ALITAVAGYEGIFTGAAAMYV.

Belongs to the acetate uptake transporter (AceTr) (TC 2.A.96) family.

It localises to the cell membrane. This is an uncharacterized protein from Methanothermobacter thermautotrophicus (strain ATCC 29096 / DSM 1053 / JCM 10044 / NBRC 100330 / Delta H) (Methanobacterium thermoautotrophicum).